The primary structure comprises 380 residues: Crotonobetainyl-CoA reductase (380 aa).

The protein belongs to the acyl-CoA dehydrogenase family. In terms of assembly, homotetramer. Requires FAD as cofactor.

It localises to the cytoplasm. The enzyme catalyses 4-(trimethylamino)butanoyl-CoA + oxidized [electron-transfer flavoprotein] + H(+) = crotonobetainyl-CoA + reduced [electron-transfer flavoprotein]. Its pathway is amine and polyamine metabolism; carnitine metabolism. In terms of biological role, catalyzes the reduction of crotonobetainyl-CoA to gamma-butyrobetainyl-CoA. This chain is Crotonobetainyl-CoA reductase, found in Proteus sp. (strain LE138).